We begin with the raw amino-acid sequence, 366 residues long: Ribosomal RNA large subunit methyltransferase M (366 aa).

S-adenosyl-L-methionine is bound by residues serine 188, cysteine 221–glycine 224, aspartate 240, aspartate 260, and aspartate 277. Lysine 306 functions as the Proton acceptor in the catalytic mechanism.

Belongs to the class I-like SAM-binding methyltransferase superfamily. RNA methyltransferase RlmE family. RlmM subfamily. In terms of assembly, monomer.

The protein resides in the cytoplasm. It carries out the reaction cytidine(2498) in 23S rRNA + S-adenosyl-L-methionine = 2'-O-methylcytidine(2498) in 23S rRNA + S-adenosyl-L-homocysteine + H(+). In terms of biological role, catalyzes the 2'-O-methylation at nucleotide C2498 in 23S rRNA. This is Ribosomal RNA large subunit methyltransferase M from Salmonella newport (strain SL254).